A 151-amino-acid polypeptide reads, in one-letter code: Small ribosomal subunit protein uS15 (151 aa).

The segment covering Met1–Arg16 has biased composition (basic residues). Residues Met1 to Pro20 form a disordered region.

This sequence belongs to the universal ribosomal protein uS15 family. Part of the 30S ribosomal subunit.

The sequence is that of Small ribosomal subunit protein uS15 from Pyrobaculum aerophilum (strain ATCC 51768 / DSM 7523 / JCM 9630 / CIP 104966 / NBRC 100827 / IM2).